Reading from the N-terminus, the 1104-residue chain is Extended synaptotagmin-1 (1104 aa).

Methionine 1 carries the post-translational modification N-acetylmethionine. The Cytoplasmic segment spans residues 1–38 (MERSPGEGPSPSPMDQPSAPSDPTDQPPAAHAKPDPGS). The tract at residues 1 to 48 (MERSPGEGPSPSPMDQPSAPSDPTDQPPAAHAKPDPGSGGQPAGPGAA) is disordered. The span at 37–47 (GSGGQPAGPGA) shows a compositional bias: gly residues. A helical membrane pass occupies residues 39-59 (GGQPAGPGAAGEALAVLTSFG). Residues 60–62 (RRL) are Lumenal-facing. Residues 63 to 83 (LVLIPVYLAGAVGLSVGFVLF) form a helical membrane-spanning segment. At 84–1104 (GLALYLGWRR…LMDNKDKGSS (1021 aa)) the chain is on the cytoplasmic side. Residues 91-116 (WRRVRDEKERSLRAARQLLDDEEQLT) are a coiled coil. An SMP-LTD domain is found at 135–313 (DVEKAEWLNK…LPNRLLVPLV (179 aa)). C2 domains lie at 312 to 433 (LVPD…DDWF), 460 to 580 (QVLQ…QLSS), 627 to 751 (SVDA…DEWL), and 777 to 899 (LEEV…TLSS). Residue serine 324 is modified to Phosphoserine; by CDK5. Ca(2+) contacts are provided by lysine 344, aspartate 345, aspartate 357, aspartate 404, aspartate 406, aspartate 408, aspartate 410, and aspartate 411. Residues 617–641 (VDSENPQRGSSVDAPPRPCHTTPDS) form a disordered region. Lysine 817 bears the N6-acetyllysine mark. Phosphoserine occurs at positions 820 and 941. A disordered region spans residues 924 to 950 (SHSYSHSSSSLSEEPELSGGPPHITSS). Residues 925–946 (HSYSHSSSSLSEEPELSGGPPH) show a composition bias toward low complexity. Threonine 948 is modified (phosphothreonine). A phosphoserine mark is found at serine 949 and serine 963. A C2 5 domain is found at 971-1093 (PLGQVKLTLW…DLSQGVARWY (123 aa)). A Phosphotyrosine modification is found at tyrosine 1009. Residues 1018 to 1025 (KNRGTKRR) form a required for phosphatidylinositol 4,5-bisphosphate-dependent location at the cell membrane region. The residue at position 1034 (serine 1034) is a Phosphoserine.

Belongs to the extended synaptotagmin family. Interacts with ESYT2 and ESYT3. Interacts with ADGRD1; inhibiting the G-protein-coupled receptor activity of ADGRD1. Interaction with ADGRD1 is abolished when cytosolic calcium increases, relieving ADGRD1 G-protein-coupled receptor activity. Interacts (phosphorylated form) with SLC2A4. In terms of processing, phosphorylated on Ser residues in insulin-treated adipocytes (in vitro); this promotes interaction with SLC2A4. As to expression, widely expressed.

The protein localises to the endoplasmic reticulum membrane. Its subcellular location is the cell membrane. Binds calcium (via the C2 domains) and translocates to sites of contact between the endoplasmic reticulum and the cell membrane in response to increased cytosolic calcium levels. Helps tether the endoplasmic reticulum to the cell membrane and promotes the formation of appositions between the endoplasmic reticulum and the cell membrane. Acts as an inhibitor of ADGRD1 G-protein-coupled receptor activity in absence of cytosolic calcium. Binds glycerophospholipids in a barrel-like domain and may play a role in cellular lipid transport. The protein is Extended synaptotagmin-1 of Homo sapiens (Human).